The following is a 413-amino-acid chain: L-arginine-specific L-amino acid ligase (413 aa).

The 198-residue stretch at 115-312 folds into the ATP-grasp domain; sequence KTKLKMEGIP…LWESSLNISV (198 aa). 141-202 contributes to the ATP binding site; sequence GEKLGWPIIV…EKCIEMEEFH (62 aa). 2 residues coordinate Mg(2+): glutamate 268 and glutamate 281. Positions 268 and 281 each coordinate Mn(2+).

Homodimer. Requires Mg(2+) as cofactor. The cofactor is Mn(2+). Co(2+) serves as cofactor.

The enzyme catalyses an L-alpha-amino acid + L-arginine + ATP = L-arginyl-L-alpha-amino acid + ADP + phosphate + H(+). Functionally, catalyzes the synthesis of Arg-Xaa dipeptides in an ATP-dependent manner. Has strict specificity toward arginine as the N-terminal substrate. The polypeptide is L-arginine-specific L-amino acid ligase (Bacillus subtilis).